The sequence spans 344 residues: uncharacterized protein (344 aa).

Transmembrane regions (helical) follow at residues 155–175 (IARI…IFLV), 181–201 (WGLG…AYGW), 221–241 (LSFI…VNGF), 254–274 (ISSF…FALL), 291–311 (FTII…AAYV), and 319–339 (ALQN…IGVF).

The protein to M.jannaschii MJ1032.

Its subcellular location is the cell membrane. This is an uncharacterized protein from Archaeoglobus fulgidus (strain ATCC 49558 / DSM 4304 / JCM 9628 / NBRC 100126 / VC-16).